We begin with the raw amino-acid sequence, 483 residues long: Probable serine incorporator (483 aa).

The next 11 helical transmembrane spans lie at 43-63, 109-129, 146-166, 169-189, 218-238, 249-269, 274-294, 295-315, 338-358, 414-434, and 457-477; these read STRITYAILFFLSSIAAWIML, IMFSVCLFHLFLSLCTIGVSS, LILLVGAMVGSFFISNSFFIG, WSWIGLVGAVLFMIVQFILLV, ISATVMLMAFVITLTVLMFHF, FFIGFNLALALLVTLTSMLPS, LPSSGILQSSVVAAYATYLVW, SAVSGVPSTCHPLIAVAPLFL, AGTNTAAIVIGALLTFISVAY, YSWSFFHLTFAVAALYLMMVL, and VVSSWVIFLLYGWTMMAPVCL.

The protein belongs to the TDE1 family.

Its subcellular location is the endoplasmic reticulum membrane. Enhances the incorporation of serine into phosphatidylserine and sphingolipids. The protein is Probable serine incorporator (serinc) of Monosiga brevicollis (Choanoflagellate).